The following is a 367-amino-acid chain: Quinolinate synthase (367 aa).

Positions 64 and 82 each coordinate iminosuccinate. A [4Fe-4S] cluster-binding site is contributed by Cys127. Iminosuccinate is bound by residues 153-155 (YVN) and Ser170. Residue Cys216 participates in [4Fe-4S] cluster binding. Iminosuccinate is bound by residues 242–244 (HPE) and Thr259. Residue Cys302 participates in [4Fe-4S] cluster binding.

The protein belongs to the quinolinate synthase family. Type 2 subfamily. The cofactor is [4Fe-4S] cluster.

It is found in the cytoplasm. The catalysed reaction is iminosuccinate + dihydroxyacetone phosphate = quinolinate + phosphate + 2 H2O + H(+). The protein operates within cofactor biosynthesis; NAD(+) biosynthesis; quinolinate from iminoaspartate: step 1/1. Its function is as follows. Catalyzes the condensation of iminoaspartate with dihydroxyacetone phosphate to form quinolinate. This Caulobacter vibrioides (strain ATCC 19089 / CIP 103742 / CB 15) (Caulobacter crescentus) protein is Quinolinate synthase.